Consider the following 309-residue polypeptide: Taste receptor type 2 member 31 (309 aa).

Residues 1 to 2 lie on the Extracellular side of the membrane; that stretch reads MI. The helical transmembrane segment at 3 to 23 threads the bilayer; it reads TFLPTIFSILVVVIFVIGNFG. The Cytoplasmic portion of the chain corresponds to 24 to 55; it reads NGFIALVNSIEWVKRQKISFADQILTALAVSR. Residues 56 to 76 form a helical membrane-spanning segment; it reads VGLLWALLLNWYSTVFNPAFY. Over 77 to 100 the chain is Extracellular; that stretch reads SVGVRTTVYDVWTVTGHFSNWLAT. The chain crosses the membrane as a helical span at residues 101–121; it reads SLSIFYLLKIANFSNLIFLHL. The Cytoplasmic portion of the chain corresponds to 122–126; sequence KRRVK. Residues 127–147 traverse the membrane as a helical segment; sequence SVILVMLLGPLLFLACQLFVI. The Extracellular portion of the chain corresponds to 148 to 181; that stretch reads NMKEILRTKEYEGNMTWKIKLRSAMYLSDATITT. Residue Asn161 is glycosylated (N-linked (GlcNAc...) asparagine). Residues 182–202 form a helical membrane-spanning segment; sequence LANLVPFTLTLLSFLLLICSL. Topologically, residues 203-229 are cytoplasmic; the sequence is CKHLNKMQLHGKGSQDPSTKVHIKVLQ. The helical transmembrane segment at 230-250 threads the bilayer; that stretch reads TVISFLLLCAIYFLSIMISVW. At 251–259 the chain is on the extracellular side; sequence SFGSLENKP. A helical transmembrane segment spans residues 260-280; the sequence is VFMFCKAIRFSYPSIHPFILI. At 281–309 the chain is on the cytoplasmic side; sequence WGNKKLKQTFLSVLRQVRYWVKGEKPSSP.

The protein belongs to the G-protein coupled receptor T2R family.

It is found in the membrane. In terms of biological role, receptor that may play a role in the perception of bitterness and is gustducin-linked. May play a role in sensing the chemical composition of the gastrointestinal content. The activity of this receptor may stimulate alpha gustducin, mediate PLC-beta-2 activation and lead to the gating of TRPM5. The chain is Taste receptor type 2 member 31 (TAS2R31) from Pongo pygmaeus (Bornean orangutan).